We begin with the raw amino-acid sequence, 286 residues long: Ribosomal RNA small subunit methyltransferase A (286 aa).

S-adenosyl-L-methionine contacts are provided by Asn28, Leu30, Gly55, Glu77, Asp103, and Asn123.

It belongs to the class I-like SAM-binding methyltransferase superfamily. rRNA adenine N(6)-methyltransferase family. RsmA subfamily.

The protein localises to the cytoplasm. It carries out the reaction adenosine(1518)/adenosine(1519) in 16S rRNA + 4 S-adenosyl-L-methionine = N(6)-dimethyladenosine(1518)/N(6)-dimethyladenosine(1519) in 16S rRNA + 4 S-adenosyl-L-homocysteine + 4 H(+). In terms of biological role, specifically dimethylates two adjacent adenosines (A1518 and A1519) in the loop of a conserved hairpin near the 3'-end of 16S rRNA in the 30S particle. May play a critical role in biogenesis of 30S subunits. The polypeptide is Ribosomal RNA small subunit methyltransferase A (Bradyrhizobium sp. (strain ORS 278)).